A 314-amino-acid polypeptide reads, in one-letter code: Ribosomal RNA small subunit methyltransferase H (314 aa).

S-adenosyl-L-methionine contacts are provided by residues 37-39, Asp57, Phe83, Asp105, and Gln112; that span reads GGH.

The protein belongs to the methyltransferase superfamily. RsmH family.

It is found in the cytoplasm. The catalysed reaction is cytidine(1402) in 16S rRNA + S-adenosyl-L-methionine = N(4)-methylcytidine(1402) in 16S rRNA + S-adenosyl-L-homocysteine + H(+). In terms of biological role, specifically methylates the N4 position of cytidine in position 1402 (C1402) of 16S rRNA. The sequence is that of Ribosomal RNA small subunit methyltransferase H from Thioalkalivibrio sulfidiphilus (strain HL-EbGR7).